We begin with the raw amino-acid sequence, 536 residues long: CTP synthase (536 aa).

The amidoligase domain stretch occupies residues 1–267; sequence MSKFVFVTGG…CKETLKYLDL (267 aa). Position 13 (serine 13) interacts with CTP. Residue serine 13 coordinates UTP. ATP-binding positions include 14 to 19 and aspartate 71; that span reads SIGKGI. Positions 71 and 141 each coordinate Mg(2+). Residues 148 to 150, 188 to 193, and lysine 224 contribute to the CTP site; these read DIE and KTKPTQ. UTP-binding positions include 188–193 and lysine 224; that span reads KTKPTQ. Positions 292-534 constitute a Glutamine amidotransferase type-1 domain; it reads KVALVGKYIE…IKASQDKLTQ (243 aa). Glycine 354 is an L-glutamine binding site. Cysteine 381 serves as the catalytic Nucleophile; for glutamine hydrolysis. L-glutamine is bound by residues 382-385, glutamate 405, and arginine 462; that span reads LGMQ. Active-site residues include histidine 507 and glutamate 509.

The protein belongs to the CTP synthase family. Homotetramer.

The enzyme catalyses UTP + L-glutamine + ATP + H2O = CTP + L-glutamate + ADP + phosphate + 2 H(+). It catalyses the reaction L-glutamine + H2O = L-glutamate + NH4(+). It carries out the reaction UTP + NH4(+) + ATP = CTP + ADP + phosphate + 2 H(+). It participates in pyrimidine metabolism; CTP biosynthesis via de novo pathway; CTP from UDP: step 2/2. Its activity is regulated as follows. Allosterically activated by GTP, when glutamine is the substrate; GTP has no effect on the reaction when ammonia is the substrate. The allosteric effector GTP functions by stabilizing the protein conformation that binds the tetrahedral intermediate(s) formed during glutamine hydrolysis. Inhibited by the product CTP, via allosteric rather than competitive inhibition. Functionally, catalyzes the ATP-dependent amination of UTP to CTP with either L-glutamine or ammonia as the source of nitrogen. Regulates intracellular CTP levels through interactions with the four ribonucleotide triphosphates. This is CTP synthase from Prochlorococcus marinus (strain AS9601).